Reading from the N-terminus, the 129-residue chain is Snaclec rhodocetin subunit beta (129 aa).

The region spanning 3–125 is the C-type lectin domain; that stretch reads RCPTTWSASK…EEKNAFLCKF (123 aa). Disulfide bonds link C4-C15, C32-C123, and C98-C115.

As to quaternary structure, heterotetramer of subunit alpha, beta, gamma and delta; only the gamma and the delta subunits are disulfide-linked. Alpha-beta heterodimer and gamma-delta heterodimer associate orthogonally, giving a cruciform conformation. This heterotetramer may covalently dimerizes thanks to the gamma subunit. Expressed by the venom gland.

Its subcellular location is the secreted. Potent inhibitor of collagen-induced platelet aggregation. It acts by binding to the integrin alpha2A domain and blocks collagen binding to integrin alpha-2/beta-1 (ITGA2/ITGB1). The gamma/delta subunits mainly contribute to this activity. This chain is Snaclec rhodocetin subunit beta, found in Calloselasma rhodostoma (Malayan pit viper).